We begin with the raw amino-acid sequence, 229 residues long: Galactonate operon transcriptional repressor (229 aa).

The 71-residue stretch at 1–71 (MTLNKTDRIV…RYRGAFVAPR (71 aa)) folds into the HTH gntR-type domain. Positions 31 to 50 (EAELCEEFATSRNIIREVFR) form a DNA-binding region, H-T-H motif. The Zn(2+) site is built by Asp146, His150, and His195.

In terms of assembly, homodimer.

With respect to regulation, D-galactonate binds DgoR and induces a conformational change in the protein, which decreases its affinity for DNA and consequently derepresses transcription of the dgoRKADT operon. Its function is as follows. Involved in the regulation of D-galactonate metabolism. Represses the expression of the dgoRKADT operon by binding to two closely spaced inverted repeats in the cis-acting element, which overlap with the D-galactonate responsive dgo promoter. Employs a derepression mechanism using D-galactonate as a specific effector molecule. The sequence is that of Galactonate operon transcriptional repressor from Escherichia coli (strain K12).